The primary structure comprises 329 residues: DNA-directed RNA polymerase subunit alpha (329 aa).

The interval methionine 1–arginine 235 is alpha N-terminal domain (alpha-NTD). The interval phenylalanine 249 to glutamate 329 is alpha C-terminal domain (alpha-CTD).

It belongs to the RNA polymerase alpha chain family. As to quaternary structure, homodimer. The RNAP catalytic core consists of 2 alpha, 1 beta, 1 beta' and 1 omega subunit. When a sigma factor is associated with the core the holoenzyme is formed, which can initiate transcription.

The enzyme catalyses RNA(n) + a ribonucleoside 5'-triphosphate = RNA(n+1) + diphosphate. DNA-dependent RNA polymerase catalyzes the transcription of DNA into RNA using the four ribonucleoside triphosphates as substrates. The chain is DNA-directed RNA polymerase subunit alpha from Aeromonas hydrophila subsp. hydrophila (strain ATCC 7966 / DSM 30187 / BCRC 13018 / CCUG 14551 / JCM 1027 / KCTC 2358 / NCIMB 9240 / NCTC 8049).